The chain runs to 143 residues: Peptide methionine sulfoxide reductase MsrB (143 aa).

Residues 16–139 form the MsrB domain; that stretch reads DAELRRRLTP…NSAALNFESR (124 aa). 4 residues coordinate Zn(2+): Cys-55, Cys-58, Cys-104, and Cys-107. Cys-128 functions as the Nucleophile in the catalytic mechanism.

This sequence belongs to the MsrB Met sulfoxide reductase family. Requires Zn(2+) as cofactor.

It carries out the reaction L-methionyl-[protein] + [thioredoxin]-disulfide + H2O = L-methionyl-(R)-S-oxide-[protein] + [thioredoxin]-dithiol. The chain is Peptide methionine sulfoxide reductase MsrB from Burkholderia cenocepacia (strain HI2424).